The following is a 79-amino-acid chain: MSDIEARVKKIIAEQLGVEESQVTNEKAFVADLGADSLDTVELVMALEDEFGIEIPDEDAEKITTVQNAVDYATKNQKA.

In terms of domain architecture, Carrier spans S2–Q77. O-(pantetheine 4'-phosphoryl)serine is present on S37.

This sequence belongs to the acyl carrier protein (ACP) family. In terms of processing, 4'-phosphopantetheine is transferred from CoA to a specific serine of apo-ACP by AcpS. This modification is essential for activity because fatty acids are bound in thioester linkage to the sulfhydryl of the prosthetic group.

The protein resides in the cytoplasm. It participates in lipid metabolism; fatty acid biosynthesis. Carrier of the growing fatty acid chain in fatty acid biosynthesis. This is Acyl carrier protein from Variovorax paradoxus (strain S110).